The chain runs to 264 residues: Acid phosphatase (264 aa).

Positions 1–28 (MIKVPRFICMIALTSGILASGLSQSVSA) are cleaved as a signal peptide.

Belongs to the class A bacterial acid phosphatase family. Requires Mg(2+) as cofactor. The cofactor is Zn(2+).

The protein resides in the periplasm. The catalysed reaction is a phosphate monoester + H2O = an alcohol + phosphate. The sequence is that of Acid phosphatase (phoC) from Zymomonas mobilis subsp. mobilis (strain ATCC 31821 / ZM4 / CP4).